The sequence spans 486 residues: Mitogen-activated protein kinase 17 (486 aa).

The Protein kinase domain occupies 16–307 (YQIQEVVGKG…AEEALADPYF (292 aa)). ATP contacts are provided by residues 22 to 30 (VGKGSYGVV) and lysine 45. The active-site Proton acceptor is the aspartate 142. Threonine 178 is modified (phosphothreonine). The TXY motif lies at 178-180 (TDY). Tyrosine 180 carries the post-translational modification Phosphotyrosine. At threonine 183 the chain carries Phosphothreonine. The segment at 386–455 (EEHNDDEEEH…LSSQKASQVD (70 aa)) is disordered. Low complexity predominate over residues 422–433 (SVHAQSSSASVV). The span at 440 to 452 (PNTATGLSSQKAS) shows a compositional bias: polar residues.

It belongs to the protein kinase superfamily. CMGC Ser/Thr protein kinase family. MAP kinase subfamily. Dually phosphorylated on Thr-178 and Tyr-180, which activates the enzyme.

The catalysed reaction is L-seryl-[protein] + ATP = O-phospho-L-seryl-[protein] + ADP + H(+). It catalyses the reaction L-threonyl-[protein] + ATP = O-phospho-L-threonyl-[protein] + ADP + H(+). With respect to regulation, activated by threonine and tyrosine phosphorylation. This chain is Mitogen-activated protein kinase 17 (MPK17), found in Arabidopsis thaliana (Mouse-ear cress).